Here is a 202-residue protein sequence, read N- to C-terminus: Putative 3-methyladenine DNA glycosylase (202 aa).

It belongs to the DNA glycosylase MPG family.

This chain is Putative 3-methyladenine DNA glycosylase, found in Staphylococcus aureus (strain MRSA252).